Reading from the N-terminus, the 217-residue chain is MGQKVCAHGFRVGPTLIKGWDSVFYAEKQYKTLFIQDLKIRELVNKSFTQAQVSRILIERPSNKSIIININAKKPNIIIGKNGSEIDKLKKAIEKMTSLSEVYINIHEVRKFNIDAAIVAQTIASQLEKRVSFRKAMKTAIQASFKQGGQGIRVSCSGRLGGAEIARTEWYIEGRMPLHTLRADIDYSTAEAITTYGVIGVKVWIYKGEYTENKRYN.

Positions Ile40–Arg110 constitute a KH type-2 domain.

It belongs to the universal ribosomal protein uS3 family. In terms of assembly, part of the 30S ribosomal subunit. Forms a tight complex with proteins S10 and S14.

Binds the lower part of the 30S subunit head. Binds mRNA in the 70S ribosome, positioning it for translation. In Rickettsia bellii (strain OSU 85-389), this protein is Small ribosomal subunit protein uS3.